The sequence spans 351 residues: Protein RecA (351 aa).

68 to 75 (GPESSGKT) provides a ligand contact to ATP.

Belongs to the RecA family.

It localises to the cytoplasm. In terms of biological role, can catalyze the hydrolysis of ATP in the presence of single-stranded DNA, the ATP-dependent uptake of single-stranded DNA by duplex DNA, and the ATP-dependent hybridization of homologous single-stranded DNAs. It interacts with LexA causing its activation and leading to its autocatalytic cleavage. The sequence is that of Protein RecA from Thermotoga neapolitana (strain ATCC 49049 / DSM 4359 / NBRC 107923 / NS-E).